A 571-amino-acid polypeptide reads, in one-letter code: Plastidial pyruvate kinase 3, chloroplastic (571 aa).

A chloroplast-targeting transit peptide spans 1 to 55 (MAAYGQISSGMTVDPQVLSSSRNIGVSLSPLRRTLIGAGVRSTSISLRQCSLSVR). A substrate-binding site is contributed by Arg129. Residues Asn131, Ser133, Asp164, and Thr165 each coordinate K(+). Position 131-134 (131-134 (NMSH)) interacts with ATP. Arg171 lines the ATP pocket. Position 314 (Lys314) interacts with substrate. Glu316 contributes to the Mg(2+) binding site. Substrate-binding residues include Gly339, Asp340, and Thr372. Asp340 contacts Mg(2+).

This sequence belongs to the pyruvate kinase family. In terms of assembly, oligomer of alpha and beta subunits. Mg(2+) serves as cofactor. K(+) is required as a cofactor. Expressed at low levels in roots, leaves, inflorescences, siliques, pollen, seeds and flowers.

It is found in the plastid. The protein resides in the chloroplast stroma. It carries out the reaction pyruvate + ATP = phosphoenolpyruvate + ADP + H(+). It participates in carbohydrate degradation; glycolysis; pyruvate from D-glyceraldehyde 3-phosphate: step 5/5. Functionally, required for plastidial pyruvate kinase activity. In Arabidopsis thaliana (Mouse-ear cress), this protein is Plastidial pyruvate kinase 3, chloroplastic (PKP3).